We begin with the raw amino-acid sequence, 275 residues long: Tryptase (275 aa).

The first 20 residues, 1 to 20, serve as a signal peptide directing secretion; it reads MLNLLVLALPLLVSLVHTAP. A propeptide spans 21–30 (activation peptide); sequence APGQALERAG. Residues 31–272 form the Peptidase S1 domain; sequence IVGGKEAPGH…YLDWIHQCIP (242 aa). A disulfide bridge links cysteine 59 with cysteine 75. Residues histidine 74 and aspartate 121 each act as charge relay system in the active site. An N-linked (GlcNAc...) asparagine glycan is attached at asparagine 132. Cystine bridges form between cysteine 155/cysteine 230, cysteine 188/cysteine 211, and cysteine 220/cysteine 248. The Charge relay system role is filled by serine 224. N-linked (GlcNAc...) asparagine glycosylation is present at asparagine 233.

This sequence belongs to the peptidase S1 family. Tryptase subfamily. In terms of assembly, homotetramer.

Its subcellular location is the secreted. It catalyses the reaction Preferential cleavage: Arg-|-Xaa, Lys-|-Xaa, but with more restricted specificity than trypsin.. Tryptase is the major neutral protease present in mast cells and is secreted upon the coupled activation-degranulation response of this cell type. The polypeptide is Tryptase (MCT7) (Sus scrofa (Pig)).